A 101-amino-acid polypeptide reads, in one-letter code: MKLTILILLVITSFCSCGILREKYAHKAIDVLTPMIGVPVVSKIVNNAAKQLVHKIAKNQQLCMFNKDVAGWCEKSCQQSAHQKGYCHGTKCKCGIPLNYK.

The signal sequence occupies residues 1 to 17; the sequence is MKLTILILLVITSFCSC. Residues 60-100 enclose the BetaSPN-type CS-alpha/beta domain; that stretch reads QQLCMFNKDVAGWCEKSCQQSAHQKGYCHGTKCKCGIPLNY. 3 disulfides stabilise this stretch: Cys-63/Cys-87, Cys-73/Cys-92, and Cys-77/Cys-94.

This sequence belongs to the long chain scorpion toxin family. Class 3 subfamily. Expressed by the venom gland.

The protein resides in the secreted. Functionally, inhibits voltage-gated potassium channels. This chain is Hg-scorpine-like-2, found in Hoffmannihadrurus gertschi (Scorpion).